A 602-amino-acid chain; its full sequence is Threonine--tRNA ligase (602 aa).

The catalytic stretch occupies residues 208 to 499 (DHRKLGTELK…LTEHCAGEFP (292 aa)). 3 residues coordinate Zn(2+): C300, H351, and H476.

Belongs to the class-II aminoacyl-tRNA synthetase family. In terms of assembly, homodimer. Zn(2+) is required as a cofactor.

It localises to the cytoplasm. The catalysed reaction is tRNA(Thr) + L-threonine + ATP = L-threonyl-tRNA(Thr) + AMP + diphosphate + H(+). Catalyzes the attachment of threonine to tRNA(Thr) in a two-step reaction: L-threonine is first activated by ATP to form Thr-AMP and then transferred to the acceptor end of tRNA(Thr). Also edits incorrectly charged L-seryl-tRNA(Thr). The chain is Threonine--tRNA ligase from Campylobacter jejuni subsp. jejuni serotype O:23/36 (strain 81-176).